Here is a 348-residue protein sequence, read N- to C-terminus: Phenylalanine--tRNA ligase alpha subunit (348 aa).

E259 contacts Mg(2+).

The protein belongs to the class-II aminoacyl-tRNA synthetase family. Phe-tRNA synthetase alpha subunit type 1 subfamily. As to quaternary structure, tetramer of two alpha and two beta subunits. Mg(2+) is required as a cofactor.

It is found in the cytoplasm. It carries out the reaction tRNA(Phe) + L-phenylalanine + ATP = L-phenylalanyl-tRNA(Phe) + AMP + diphosphate + H(+). The protein is Phenylalanine--tRNA ligase alpha subunit of Lactiplantibacillus plantarum (strain ATCC BAA-793 / NCIMB 8826 / WCFS1) (Lactobacillus plantarum).